We begin with the raw amino-acid sequence, 288 residues long: MSNLCRNIKVFFKVFLYRFKQNKLNQAAGYLTYSTTLALVPLIMVFFSVFAAFPVFNEITGELKQFIFTNFAPSTGDAVGEYIDQFVNNSKQMSAVGIISLIVVALMLIHSIDRTLNSIWLDTSVRPAIFSFAIYWLILTLGPIVIATSIGISTYVTKFATYTFEQDLGLSVGIKLLSLMPFFLTWFIFTVLYMVVPNKKVSIIHSAAGALIAAVFFTLGKQAFTWYITTFPSYQLIYGAMATLPIMLLWIQLSWTAVLLGAQLSAVLADMRSLDDSNIQIEKMKEEK.

6 helical membrane-spanning segments follow: residues 36–56 (TLALVPLIMVFFSVFAAFPVF), 92–112 (QMSAVGIISLIVVALMLIHSI), 127–147 (PAIFSFAIYWLILTLGPIVIA), 176–196 (LLSLMPFFLTWFIFTVLYMVV), 200–220 (KVSIIHSAAGALIAAVFFTLG), and 240–260 (AMATLPIMLLWIQLSWTAVLL).

It belongs to the UPF0761 family.

It is found in the cell inner membrane. The polypeptide is UPF0761 membrane protein HSM_1104 (Histophilus somni (strain 2336) (Haemophilus somnus)).